Here is a 463-residue protein sequence, read N- to C-terminus: NEDD8-activating enzyme E1 catalytic subunit (463 aa).

The residue at position 2 (Ala2) is an N-acetylalanine. Residues 53 to 70 (HPDFEPSTESLQFLLDTC) are interaction with UBE2M N-terminus. Residues 100-124 (DMDTIDVSNLNRQFLFRPKDIGRPK) and 148-171 (IQDFNDTFYRQFHIIVCGLDSIIA) contribute to the ATP site. Interaction with UBE2M N-terminus regions lie at residues 157 to 161 (RQFHI) and 192 to 217 (PSSIVPLIDGGTEGFKGNARVILPGM). Positions 227–229 (LYP) are interaction with NEDD8. Cys237 serves as the catalytic Glycyl thioester intermediate. Interaction with NAE1 stretches follow at residues 242–248 (MPRLPEH) and 292–295 (YNIR). The tract at residues 331–338 (IATSAYIP) is interaction with UBE2M N-terminus. Positions 352 to 357 (YTYTFE) are interaction with NEDD8. Positions 368–463 (SQLPQNIQFS…TVLFKLHFTS (96 aa)) are interaction with UBE2M core domain.

Belongs to the ubiquitin-activating E1 family. UBA3 subfamily. In terms of assembly, heterodimer of UBA3 and NAE1. Interacts with NEDD8, UBE2F and UBE2M. Binds ESR1 and ESR2 with bound steroid ligand. Interacts with TBATA. Ubiquitously expressed.

It catalyses the reaction ATP + [NEDD8 protein] + [E1 NEDD8-activating enzyme]-L-cysteine = AMP + diphosphate + [E1 NEDD8-activating enzyme]-S-[NEDD8 protein]-yl-L-cysteine.. It participates in protein modification; protein neddylation. Its activity is regulated as follows. Binding of TP53BP2 to the regulatory subunit NAE1 decreases activity. Catalytic subunit of the dimeric UBA3-NAE1 E1 enzyme. E1 activates NEDD8 by first adenylating its C-terminal glycine residue with ATP, thereafter linking this residue to the side chain of the catalytic cysteine, yielding a NEDD8-UBA3 thioester and free AMP. E1 finally transfers NEDD8 to the catalytic cysteine of UBE2M. Down-regulates steroid receptor activity. Necessary for cell cycle progression. The chain is NEDD8-activating enzyme E1 catalytic subunit (UBA3) from Homo sapiens (Human).